The following is a 156-amino-acid chain: Small ribosomal subunit protein uS7 (156 aa).

The protein belongs to the universal ribosomal protein uS7 family. As to quaternary structure, part of the 30S ribosomal subunit. Contacts proteins S9 and S11.

Functionally, one of the primary rRNA binding proteins, it binds directly to 16S rRNA where it nucleates assembly of the head domain of the 30S subunit. Is located at the subunit interface close to the decoding center, probably blocks exit of the E-site tRNA. The sequence is that of Small ribosomal subunit protein uS7 from Shewanella baltica (strain OS223).